The following is a 386-amino-acid chain: MIKILGIESSCDDTAVSIITENREILSNIIISQNTEHAVFGGVVPEIAARSHLSNLDKALTNVLKESNTKLIEISAIAATSGPGLIGGVIVGSMFARSLSSTLKKPFIAINHLEGHALTARLTDNIPYPYLLLLASGGHCQFVAVLGLGKYKILGSTIDDAVGETFDKVAKMLNLAFPGGPEIEQKAKLGDPHKYKFPKPIINSGNCNMSFSGLKTAVRTLIMNLQEINYNECNHLESVRQDEVQEEFAQRTKVHEHRRKLQNSLVSSFLNDSVINDIAASFQFTIGEILSSKVQDAIRAYEQITNNFDKKNIIIAGGVAANKYLQEILSNCAKTYGYQLIYPPIHLCTDNAAMIAYAGLERYNNKLFTPLNFCPKARWSLEDISK.

Positions 112 and 116 each coordinate Fe cation. Substrate contacts are provided by residues 134–138 (LASGG), Asp167, Gly180, and Asn322. Position 350 (Asp350) interacts with Fe cation.

The protein belongs to the KAE1 / TsaD family. Fe(2+) is required as a cofactor.

The protein localises to the cytoplasm. It catalyses the reaction L-threonylcarbamoyladenylate + adenosine(37) in tRNA = N(6)-L-threonylcarbamoyladenosine(37) in tRNA + AMP + H(+). In terms of biological role, required for the formation of a threonylcarbamoyl group on adenosine at position 37 (t(6)A37) in tRNAs that read codons beginning with adenine. Is involved in the transfer of the threonylcarbamoyl moiety of threonylcarbamoyl-AMP (TC-AMP) to the N6 group of A37, together with TsaE and TsaB. TsaD likely plays a direct catalytic role in this reaction. This Rickettsia akari (strain Hartford) protein is tRNA N6-adenosine threonylcarbamoyltransferase.